The chain runs to 298 residues: MPLSGTPAPNKKRKSSKLIMELTGGGQESSGLNLGKKISVPRDVMLEELSLLTNRGSKMFKLRQMRVEKFIYENHPDVFSDSSMDHFQKFLPTVGGQLGTAGQGFSYSKGSSGGQAGGSSSAGQYGSGQQHHHQGSGSGSGGAGGPGSQTGRGGDAGTTGVGETGTGDQAGGEGKHITVFKTYISPWEKAMGVDPHQKVELGIDLLAYGAKAELPQYKSFNRTAMPYGGYEKASKRMTFQMPKFDLGPLLSEPLVLYNQNLSNRPSFNRTPIPWLSSGEPVDYNVDIGIPLDGETEEL.

The disordered stretch occupies residues 1–34 (MPLSGTPAPNKKRKSSKLIMELTGGGQESSGLNL). Residue Ser82 is modified to Phosphoserine. Residues 105–173 (FSYSKGSSGG…TGTGDQAGGE (69 aa)) form a disordered region. Low complexity predominate over residues 118-129 (GSSSAGQYGSGQ). Residues 136–172 (SGSGSGGAGGPGSQTGRGGDAGTTGVGETGTGDQAGG) show a composition bias toward gly residues.

It belongs to the myozenin family. Interacts with ACTN2, ACTN3, FLNA, FLNB, FLNC, LDB3, PPP3CA and TCAP. Interacts via its C-terminal region with MYOT.

It localises to the nucleus. The protein localises to the cell projection. The protein resides in the pseudopodium. Functionally, myozenins may serve as intracellular binding proteins involved in linking Z-disk proteins such as alpha-actinin, gamma-filamin, TCAP/telethonin, LDB3/ZASP and localizing calcineurin signaling to the sarcomere. Plays an important role in the modulation of calcineurin signaling. May play a role in myofibrillogenesis. The polypeptide is Myozenin-1 (MYOZ1) (Sus scrofa (Pig)).